Reading from the N-terminus, the 181-residue chain is uncharacterized protein (181 aa).

Topologically, residues 1-14 are cytoplasmic; that stretch reads MQKCIMRSTEFKTH. The chain crosses the membrane as a helical span at residues 15–35; sequence FSFHSIFSFPLSAALLALISA. At 36–58 the chain is on the extracellular side; it reads SEPASKAFINVQFISSPLVKKEV. A helical membrane pass occupies residues 59 to 79; the sequence is LPFIVSFHSLSSNGILSFSPF. The Cytoplasmic segment spans residues 80 to 84; the sequence is TSSNL. Residues 85 to 105 form a helical membrane-spanning segment; it reads SIAQLPFLIKVPLLSMGSLAL. The Extracellular portion of the chain corresponds to 106 to 116; that stretch reads ENFNKFIPRAD. The helical transmembrane segment at 117 to 137 threads the bilayer; sequence LVAAWVTIIMVFTFGNFLSTL. Over 138 to 153 the chain is Cytoplasmic; that stretch reads SIKTGQNLWHLSKISS. The chain crosses the membrane as a helical span at residues 154–174; it reads SVSPLLLGIILGSQSGEIMLG. Residues 175-181 lie on the Extracellular side of the membrane; that stretch reads KNLLITS.

It localises to the membrane. This is an uncharacterized protein from Saccharomyces cerevisiae (strain ATCC 204508 / S288c) (Baker's yeast).